The sequence spans 86 residues: NADH-ubiquinone oxidoreductase chain 4L (86 aa).

A run of 2 helical transmembrane segments spans residues 22 to 42 (LLVT…LLVY) and 52 to 72 (FIFL…LVSL).

Belongs to the complex I subunit 4L family.

The protein localises to the mitochondrion membrane. The catalysed reaction is a ubiquinone + NADH + 5 H(+)(in) = a ubiquinol + NAD(+) + 4 H(+)(out). Its function is as follows. Core subunit of the mitochondrial membrane respiratory chain NADH dehydrogenase (Complex I) that is believed to belong to the minimal assembly required for catalysis. Complex I functions in the transfer of electrons from NADH to the respiratory chain. The immediate electron acceptor for the enzyme is believed to be ubiquinone. The protein is NADH-ubiquinone oxidoreductase chain 4L (ND4L) of Artemia salina (Brine shrimp).